The primary structure comprises 418 residues: Gamma-glutamyl phosphate reductase (418 aa).

The protein belongs to the gamma-glutamyl phosphate reductase family.

Its subcellular location is the cytoplasm. The enzyme catalyses L-glutamate 5-semialdehyde + phosphate + NADP(+) = L-glutamyl 5-phosphate + NADPH + H(+). The protein operates within amino-acid biosynthesis; L-proline biosynthesis; L-glutamate 5-semialdehyde from L-glutamate: step 2/2. Catalyzes the NADPH-dependent reduction of L-glutamate 5-phosphate into L-glutamate 5-semialdehyde and phosphate. The product spontaneously undergoes cyclization to form 1-pyrroline-5-carboxylate. The chain is Gamma-glutamyl phosphate reductase from Nitrosococcus oceani (strain ATCC 19707 / BCRC 17464 / JCM 30415 / NCIMB 11848 / C-107).